We begin with the raw amino-acid sequence, 162 residues long: Inorganic pyrophosphatase (162 aa).

Residue glutamate 8 participates in Mg(2+) binding. Positions 16, 30, and 42 each coordinate substrate. The Mg(2+) site is built by aspartate 52, aspartate 57, aspartate 84, and aspartate 89. Aspartate 89 functions as the Proton acceptor in the catalytic mechanism. Tyrosine 126 provides a ligand contact to substrate.

The protein belongs to the PPase family. As to quaternary structure, homohexamer. The cofactor is Mg(2+).

The protein localises to the cytoplasm. It catalyses the reaction diphosphate + H2O = 2 phosphate + H(+). Functionally, catalyzes the hydrolysis of inorganic pyrophosphate (PPi) forming two phosphate ions. The chain is Inorganic pyrophosphatase from Mycobacterium bovis (strain ATCC BAA-935 / AF2122/97).